Here is a 208-residue protein sequence, read N- to C-terminus: Imidazole glycerol phosphate synthase subunit HisH (208 aa).

Residues 1–206 form the Glutamine amidotransferase type-1 domain; sequence MIVIIDYDTG…KEVIRSCKSS (206 aa). Cys-79 functions as the Nucleophile in the catalytic mechanism. Catalysis depends on residues His-181 and Glu-183.

As to quaternary structure, heterodimer of HisH and HisF.

The protein localises to the cytoplasm. The catalysed reaction is 5-[(5-phospho-1-deoxy-D-ribulos-1-ylimino)methylamino]-1-(5-phospho-beta-D-ribosyl)imidazole-4-carboxamide + L-glutamine = D-erythro-1-(imidazol-4-yl)glycerol 3-phosphate + 5-amino-1-(5-phospho-beta-D-ribosyl)imidazole-4-carboxamide + L-glutamate + H(+). It catalyses the reaction L-glutamine + H2O = L-glutamate + NH4(+). The protein operates within amino-acid biosynthesis; L-histidine biosynthesis; L-histidine from 5-phospho-alpha-D-ribose 1-diphosphate: step 5/9. Functionally, IGPS catalyzes the conversion of PRFAR and glutamine to IGP, AICAR and glutamate. The HisH subunit catalyzes the hydrolysis of glutamine to glutamate and ammonia as part of the synthesis of IGP and AICAR. The resulting ammonia molecule is channeled to the active site of HisF. The polypeptide is Imidazole glycerol phosphate synthase subunit HisH (Listeria welshimeri serovar 6b (strain ATCC 35897 / DSM 20650 / CCUG 15529 / CIP 8149 / NCTC 11857 / SLCC 5334 / V8)).